The primary structure comprises 231 residues: Small ribosomal subunit protein uS2 (231 aa).

The tract at residues 1–23 (MKVTNLSEKEERGGELTEAEKEE) is disordered. Residues 7–23 (SEKEERGGELTEAEKEE) are compositionally biased toward basic and acidic residues.

Belongs to the universal ribosomal protein uS2 family.

The sequence is that of Small ribosomal subunit protein uS2 (rps2) from Saccharolobus solfataricus (strain ATCC 35092 / DSM 1617 / JCM 11322 / P2) (Sulfolobus solfataricus).